A 258-amino-acid polypeptide reads, in one-letter code: Coiled-coil domain-containing protein 127 (258 aa).

The stretch at 50-170 (KEIEKEKEAC…EEALAERQSI (121 aa)) forms a coiled coil.

The chain is Coiled-coil domain-containing protein 127 (CCDC127) from Sus scrofa (Pig).